Consider the following 429-residue polypeptide: S-adenosylmethionine synthase (429 aa).

Histidine 14 is an ATP binding site. Aspartate 16 contributes to the Mg(2+) binding site. Glutamate 42 contributes to the K(+) binding site. Glutamate 55 and glutamine 98 together coordinate L-methionine. The flexible loop stretch occupies residues glutamine 98 to arginine 108. Residues aspartate 165–lysine 167, lysine 252–phenylalanine 253, aspartate 261, arginine 267–lysine 268, alanine 284, and lysine 288 contribute to the ATP site. Aspartate 261 contacts L-methionine. Position 292 (lysine 292) interacts with L-methionine.

The protein belongs to the AdoMet synthase family. As to quaternary structure, homotetramer; dimer of dimers. Mg(2+) serves as cofactor. It depends on K(+) as a cofactor.

It localises to the cytoplasm. It carries out the reaction L-methionine + ATP + H2O = S-adenosyl-L-methionine + phosphate + diphosphate. It functions in the pathway amino-acid biosynthesis; S-adenosyl-L-methionine biosynthesis; S-adenosyl-L-methionine from L-methionine: step 1/1. Functionally, catalyzes the formation of S-adenosylmethionine (AdoMet) from methionine and ATP. The overall synthetic reaction is composed of two sequential steps, AdoMet formation and the subsequent tripolyphosphate hydrolysis which occurs prior to release of AdoMet from the enzyme. This is S-adenosylmethionine synthase from Porphyromonas gingivalis (strain ATCC 33277 / DSM 20709 / CIP 103683 / JCM 12257 / NCTC 11834 / 2561).